Here is a 59-residue protein sequence, read N- to C-terminus: Temporin-HN2 (59 aa).

Residues 1–22 (MFTLKKSLLLLLFLGTINLSLS) form the signal peptide. Residues 16–44 (TINLSLSEQERDAKEERRDEMDVEVEKRN) adopt a coiled-coil conformation. Residues 23-41 (EQERDAKEERRDEMDVEVE) constitute a propeptide that is removed on maturation. A Leucine amide modification is found at Leu-57.

Expressed by the skin glands.

The protein localises to the secreted. Functionally, has antimicrobial activity against some Gram-positive bacteria and fungi but has no activity against a range of Gram-negative bacteria except P.faecalis. Active against the Gram-positive bacteria S.aureus ATCC 25923 (MIC=4.8 uM), S.carnosus KHS (MIC=19 uM), B.licheniformis X39 (MIC=19 uM) and R.rhodochrous X15 (MIC=2.4 uM) but is inactive against E.faecium 091299 and E.faecalis 981. Has a less potent antimicrobial activity against the Gram-negative bacterium P.faecalis X29 (MIC=37.5 uM) and is inactive against E.coli, P.aeruginosa and S.typhi. Has antifungal activity against C.albicans ATCC 2002 (MIC=9.5 uM) and is also active against the slime mold 090223 (MIC=9.5 uM). Has extremely low hemolytic activity against human erythrocytes (LC(50)=300 uM). This is Temporin-HN2 from Odorrana hainanensis (Odor frog).